The sequence spans 141 residues: MRAVVQRVSHASVTVDGKVVGAIDEPGLLALVGVTHTDGPAEAAKLARKLWTLRILEDEKSCSDVGAPLLVVSQFTLYGDARKGRRPTWHAAAPGPVAEPLVDQVVEELRALGARVETGVFGARMSVALTNEGPFTVLLEV.

Residues 133–134 carry the Gly-cisPro motif, important for rejection of L-amino acids motif; the sequence is GP.

This sequence belongs to the DTD family. In terms of assembly, homodimer.

It localises to the cytoplasm. The enzyme catalyses glycyl-tRNA(Ala) + H2O = tRNA(Ala) + glycine + H(+). The catalysed reaction is a D-aminoacyl-tRNA + H2O = a tRNA + a D-alpha-amino acid + H(+). In terms of biological role, an aminoacyl-tRNA editing enzyme that deacylates mischarged D-aminoacyl-tRNAs. Also deacylates mischarged glycyl-tRNA(Ala), protecting cells against glycine mischarging by AlaRS. Acts via tRNA-based rather than protein-based catalysis; rejects L-amino acids rather than detecting D-amino acids in the active site. By recycling D-aminoacyl-tRNA to D-amino acids and free tRNA molecules, this enzyme counteracts the toxicity associated with the formation of D-aminoacyl-tRNA entities in vivo and helps enforce protein L-homochirality. This Thermobifida fusca (strain YX) protein is D-aminoacyl-tRNA deacylase.